The primary structure comprises 356 residues: Naringenin,2-oxoglutarate 3-dioxygenase (356 aa).

Positions 188 to 292 (CVDMDQKVVV…RLSIATFQNP (105 aa)) constitute a Fe2OG dioxygenase domain. The Fe cation site is built by His215, Asp217, and His273. Arg283 lines the 2-oxoglutarate pocket.

This sequence belongs to the iron/ascorbate-dependent oxidoreductase family. Requires Fe(2+) as cofactor. The cofactor is L-ascorbate.

The enzyme catalyses a (2S)-flavan-4-one + 2-oxoglutarate + O2 = a (2R,3R)-dihydroflavonol + succinate + CO2. The protein operates within secondary metabolite biosynthesis; flavonoid biosynthesis. Catalyzes the 3-beta-hydroxylation of 2S-flavanones to 2R,3R-dihydroflavonols which are intermediates in the biosynthesis of flavonols, anthocyanidins, catechins and proanthocyanidins in plants. This chain is Naringenin,2-oxoglutarate 3-dioxygenase (FHT), found in Callistephus chinensis (China aster).